Reading from the N-terminus, the 254-residue chain is Allene oxide cyclase 4, chloroplastic (254 aa).

Residues Met-1–Arg-52 constitute a chloroplast transit peptide.

It belongs to the allene oxide cyclase family. In terms of tissue distribution, highly expressed in fully developed leaves.

Its subcellular location is the plastid. It is found in the chloroplast. The catalysed reaction is (9Z,13S,15Z)-12,13-epoxyoctadeca-9,11,15-trienoate = (9S,13S,15Z)-12-oxophyto-10,15-dienoate. In terms of biological role, involved in the production of 12-oxo-phytodienoic acid (OPDA), a precursor of jasmonic acid. The protein is Allene oxide cyclase 4, chloroplastic (AOC4) of Arabidopsis thaliana (Mouse-ear cress).